We begin with the raw amino-acid sequence, 315 residues long: Lipoyl synthase (315 aa).

A disordered region spans residues 1–33 (MADMPPVLRHPEKAHRPDQPQPKKPDWIRVKAP). Positions 9–29 (RHPEKAHRPDQPQPKKPDWIR) are enriched in basic and acidic residues. C54, C59, C65, C80, C84, C87, and S294 together coordinate [4Fe-4S] cluster. In terms of domain architecture, Radical SAM core spans 66–283 (WSQGHATMMI…EKAAYGKGFL (218 aa)).

Belongs to the radical SAM superfamily. Lipoyl synthase family. It depends on [4Fe-4S] cluster as a cofactor.

The protein resides in the cytoplasm. The enzyme catalyses [[Fe-S] cluster scaffold protein carrying a second [4Fe-4S](2+) cluster] + N(6)-octanoyl-L-lysyl-[protein] + 2 oxidized [2Fe-2S]-[ferredoxin] + 2 S-adenosyl-L-methionine + 4 H(+) = [[Fe-S] cluster scaffold protein] + N(6)-[(R)-dihydrolipoyl]-L-lysyl-[protein] + 4 Fe(3+) + 2 hydrogen sulfide + 2 5'-deoxyadenosine + 2 L-methionine + 2 reduced [2Fe-2S]-[ferredoxin]. Its pathway is protein modification; protein lipoylation via endogenous pathway; protein N(6)-(lipoyl)lysine from octanoyl-[acyl-carrier-protein]: step 2/2. Catalyzes the radical-mediated insertion of two sulfur atoms into the C-6 and C-8 positions of the octanoyl moiety bound to the lipoyl domains of lipoate-dependent enzymes, thereby converting the octanoylated domains into lipoylated derivatives. This is Lipoyl synthase from Paracoccus denitrificans (strain Pd 1222).